The chain runs to 197 residues: Dephospho-CoA kinase (197 aa).

One can recognise a DPCK domain in the interval 2–197 (IIGITGGIAS…SALLSLANPR (196 aa)). 10-15 (ASGKST) provides a ligand contact to ATP.

Belongs to the CoaE family.

The protein localises to the cytoplasm. It catalyses the reaction 3'-dephospho-CoA + ATP = ADP + CoA + H(+). It participates in cofactor biosynthesis; coenzyme A biosynthesis; CoA from (R)-pantothenate: step 5/5. Its function is as follows. Catalyzes the phosphorylation of the 3'-hydroxyl group of dephosphocoenzyme A to form coenzyme A. This Streptococcus pyogenes serotype M28 (strain MGAS6180) protein is Dephospho-CoA kinase.